Consider the following 488-residue polypeptide: Glycogen synthase (488 aa).

Lysine 16 is an ADP-alpha-D-glucose binding site.

Belongs to the glycosyltransferase 1 family. Bacterial/plant glycogen synthase subfamily.

The catalysed reaction is [(1-&gt;4)-alpha-D-glucosyl](n) + ADP-alpha-D-glucose = [(1-&gt;4)-alpha-D-glucosyl](n+1) + ADP + H(+). It functions in the pathway glycan biosynthesis; glycogen biosynthesis. Its function is as follows. Synthesizes alpha-1,4-glucan chains using ADP-glucose. This is Glycogen synthase from Marinobacter nauticus (strain ATCC 700491 / DSM 11845 / VT8) (Marinobacter aquaeolei).